Reading from the N-terminus, the 261-residue chain is Transcription factor BEE 3 (261 aa).

Over residues 72-82 (NIQNNEESSSQ) the composition is skewed to low complexity. Disordered regions lie at residues 72-158 (NIQN…TDSH) and 242-261 (VEMGQGRDGSSVFHSSSWTL). Polar residues predominate over residues 95–123 (VSTSENSVSDQTLSTSSAQVSINGNISTK). Basic and acidic residues predominate over residues 135–146 (NREEEKEREVVH). The bHLH domain maps to 153 to 203 (QATDSHSIAERVRRGKINERLKCLQDIVPGCYKTMGMATMLDEIINYVQSL).

Homodimer. As to expression, expressed in stems.

It is found in the nucleus. Functionally, positive regulator of brassinosteroid signaling. The polypeptide is Transcription factor BEE 3 (BEE3) (Arabidopsis thaliana (Mouse-ear cress)).